Here is a 634-residue protein sequence, read N- to C-terminus: Polyadenylate-binding protein 1A (634 aa).

4 RRM domains span residues 11-89 (ASLY…WSQR), 99-175 (GNIF…RFKS), 191-268 (TNVY…RAQK), and 294-370 (VNLY…LAQR). In terms of domain architecture, PABC spans 541–618 (QEPLTASMLA…AVAVLQAHQA (78 aa)).

The protein belongs to the polyadenylate-binding protein type-1 family. As to quaternary structure, interacts with ybx1; interaction recruits pabpc1a on C5-methylcytosine (m5C)-containing mRNAs, preventing their degradation.

It is found in the cytoplasm. Its function is as follows. Binds the poly(A) tail of mRNA. Prevents mRNA deadenylation and confers poly(A) stability. Binds to N6-methyladenosine (m6A)-containing mRNAs. Stimulates the translation of mRNAs to which it is bound, acting, at least in part, with dazl. Involved in the maternal-to-zygotic transition in early embryo via interaction with ybx1: interaction recruits pabpc1a on C5-methylcytosine (m5C)-containing maternal mRNAs, preventing their degradation. The chain is Polyadenylate-binding protein 1A from Danio rerio (Zebrafish).